We begin with the raw amino-acid sequence, 207 residues long: Ras-related protein Rab-8A (207 aa).

The GTP site is built by S17, G18, V19, G20, K21, T22, C23, S35, S39, and T40. T22 serves as a coordination point for Mg(2+). Short sequence motifs (switch) lie at residues 31-45 (DAFNSTFISTIGIDF) and 63-80 (DTAGQERFRTITTAYYRG). Residues T40 and D63 each contribute to the Mg(2+) site. G66 is a binding site for GTP. T72 carries the phosphothreonine; by LRRK2 modification. GTP contacts are provided by N121, K122, D124, A152, and K153. Phosphoserine is present on residues S181 and S185. At C204 the chain carries Cysteine methyl ester. Residue C204 is the site of S-geranylgeranyl cysteine attachment. Residues 205-207 (SLL) constitute a propeptide, removed in mature form.

Belongs to the small GTPase superfamily. Rab family. In terms of assembly, interacts (GTP-bound form) with MICALL1; regulates RAB8A association with recycling endosomes. Interacts with MICALL2; competes with RAB13 and is involved in E-cadherin endocytic recycling. Interacts (GTP-bound form) with MICAL1, MICALCL, MICAL3 and EHBP1L1; two molecules of RAB8A can bind to one molecule of the effector protein; ternary complexes of RAB8A, RAB13 and either MICAL1 or EHBP1L1 are possible. Interacts (GTP-bound form) with EHBP1. Interacts with EHD1. Interacts with MAP4K2 and SYTL4. Interacts with SGSM1 and SGSM3. Interacts with RABIF, RIMS2, RPH3A and RPH3A. Interacts with OPTN. Interacts with MYO5B. Interacts with CIMAP3. Interacts with BIRC6/bruce. Interacts with OCRL. Interacts with AHI1. Interacts with DCDC1. Interacts with LRRK2; interaction facilitates phosphorylation of Thr-72. Interacts with RAB31P, GDI1, GDI2, CHM, CHML, RABGGTA, RABGGTB, TBC1D15 and INPP5B; these interactions are dependent on Thr-72 not being phosphorylated. Interacts with RILPL1 and RILPL2; these interactions are dependent on the phosphorylation of Thr-72 by LRRK2. Interacts with DZIP1; prevents inhibition by the GDP-dissociation inhibitor GDI2. Interacts with RAB3IP/Rabin8, RAB3IP functions as guanine exchange factor (GEF) towards RAB8A. Interacts (in GDP-bound form) with RPGR, RPGR functions as GEF towards RAB8A. Requires Mg(2+) as cofactor. Phosphorylation of Thr-72 in the switch II region by LRRK2 prevents the association of RAB regulatory proteins, including CHM, CHML and RAB GDP dissociation inhibitors GDI1 and GDI2. Phosphorylation by LRRK2 is required for localization to stressed lysosomes.

The protein localises to the cell membrane. It localises to the golgi apparatus. The protein resides in the endosome membrane. Its subcellular location is the recycling endosome membrane. It is found in the cell projection. The protein localises to the cilium. It localises to the cytoplasmic vesicle. The protein resides in the phagosome membrane. Its subcellular location is the cytoplasm. It is found in the cytoskeleton. The protein localises to the microtubule organizing center. It localises to the centrosome. The protein resides in the centriole. Its subcellular location is the cilium basal body. It is found in the midbody. The protein localises to the lysosome. It carries out the reaction GTP + H2O = GDP + phosphate + H(+). With respect to regulation, regulated by guanine nucleotide exchange factors (GEFs) such as RAB3IP/Rabin8 and RPGR which promote the exchange of bound GDP for free GTP, GTPase activating proteins (GAPs) which increase the GTP hydrolysis activity, and GDP dissociation inhibitors (GDIs) which inhibit the dissociation of the nucleotide from the GTPase. Activated in response to insulin. Its function is as follows. The small GTPases Rab are key regulators of intracellular membrane trafficking, from the formation of transport vesicles to their fusion with membranes. Rabs cycle between an inactive GDP-bound form and an active GTP-bound form that is able to recruit to membranes different sets of downstream effectors directly responsible for vesicle formation, movement, tethering and fusion. RAB8A is involved in polarized vesicular trafficking and neurotransmitter release. Together with RAB11A, RAB3IP, the exocyst complex, PARD3, PRKCI, ANXA2, CDC42 and DNMBP promotes transcytosis of PODXL to the apical membrane initiation sites (AMIS), apical surface formation and lumenogenesis. Regulates the compacted morphology of the Golgi. Together with MYO5B and RAB11A participates in epithelial cell polarization. Also involved in membrane trafficking to the cilium and ciliogenesis. Together with MICALL2, may also regulate adherens junction assembly. May play a role in insulin-induced transport to the plasma membrane of the glucose transporter GLUT4 and therefore play a role in glucose homeostasis. Involved in autophagy. Participates in the export of a subset of neosynthesized proteins through a Rab8-Rab10-Rab11-dependent endososomal export route. Targeted to and stabilized on stressed lysosomes through LRRK2 phosphorylation. Suppresses stress-induced lysosomal enlargement through EHBP1 and EHNP1L1 effector proteins. The chain is Ras-related protein Rab-8A from Mus musculus (Mouse).